The following is a 212-amino-acid chain: Ras-related protein Rab-17 (212 aa).

Phosphoserine is present on Ser-29. GTP-binding residues include Gly-31, Lys-32, Ser-33, and Thr-50. 3 residues coordinate Mg(2+): Ser-33, Thr-50, and Asp-73. The Switch 1 motif lies at 43–54 (DFKSILPTVGCA). A Switch 2 motif is present at residues 75-91 (AGQEKYHSVCHLYFRGA). GTP contacts are provided by Gly-76, Asn-132, Lys-133, Asp-135, and Ala-163. 2 S-geranylgeranyl cysteine lipidation sites follow: Cys-209 and Cys-210.

It belongs to the small GTPase superfamily. Rab family. The cofactor is Mg(2+). As to expression, expressed in melanocytes (at protein level).

The protein resides in the recycling endosome membrane. It localises to the melanosome. It is found in the cell projection. Its subcellular location is the dendrite. It carries out the reaction GTP + H2O = GDP + phosphate + H(+). Regulated by guanine nucleotide exchange factors (GEFs) which promote the exchange of bound GDP for free GTP. Regulated by GTPase activating proteins (GAPs) which increase the GTP hydrolysis activity. Inhibited by GDP dissociation inhibitors (GDIs). Its function is as follows. The small GTPases Rab are key regulators of intracellular membrane trafficking, from the formation of transport vesicles to their fusion with membranes. Rabs cycle between an inactive GDP-bound form and an active GTP-bound form that is able to recruit to membranes different set of downstream effectors directly responsible for vesicle formation, movement, tethering and fusion. RAB17 is involved in transcytosis, the directed movement of endocytosed material through the cell and its exocytosis from the plasma membrane at the opposite side. Mainly observed in epithelial cells, transcytosis mediates for instance, the transcellular transport of immunoglobulins from the basolateral surface to the apical surface. Most probably controls membrane trafficking through apical recycling endosomes in a post-endocytic step of transcytosis. Required for melanosome transport and release from melanocytes, it also regulates dendrite and dendritic spine development. May also play a role in cell migration. This Homo sapiens (Human) protein is Ras-related protein Rab-17.